A 434-amino-acid polypeptide reads, in one-letter code: MFRRRPPLPPFPPGAALVGGAVRDWLRGVRSADYDWAHPDPAAGARALAALVGGAAFPLDEERGYWRVTAGEVQHDFVPLPPNLEDDLRRRDFTVNAIALREGRRLVDPLGGQQDLKRRVLRMVSEDNLRADPLRAWRAARFVTTLSFTLEPQTEQAVRQVAADLKAGRLPFPAWERVRDELHALLRSPDAARGILTLEALGLLDLTLPELREGQGLTQGGFHHLDVFEHGVEALHQLLTRRPDADLLLRWATLLHDVGKPRTFARDPDTGRRSFHGHDRVGAELTTQILTRLKLPGADVKRAAALVKAHMVQLPADDAQARRFVHRRRELLPDLLSLMLADREAARGPSSSELGRFAYMLAMERVLAALEEQPAAPPPLLSGKEVMALLGLTPGPRVGEVLRALAEARALGEVGTPQEARAFVQRWAEETPGS.

20 to 23 provides a ligand contact to ATP; it reads GAVR. Residues Asp33 and Asp35 each coordinate Mg(2+). ATP contacts are provided by residues 91–92, Asn96, 132–141, and Arg177; these read RD and DPLRAWRAAR. The HD domain occupies 227-339; that stretch reads VFEHGVEALH…ELLPDLLSLM (113 aa).

It belongs to the tRNA nucleotidyltransferase/poly(A) polymerase family. It depends on Mg(2+) as a cofactor.

The catalysed reaction is a tRNA with a 3' CC end + ATP = a tRNA with a 3' CCA end + diphosphate. Its function is as follows. tRNA nucleotidyltransferase involved in the synthesis of the tRNA CCA terminus. Adds the terminal adenosine residue to tRNA. This chain is A-adding tRNA nucleotidyltransferase, found in Deinococcus radiodurans (strain ATCC 13939 / DSM 20539 / JCM 16871 / CCUG 27074 / LMG 4051 / NBRC 15346 / NCIMB 9279 / VKM B-1422 / R1).